The sequence spans 268 residues: Hydroxyethylthiazole kinase (268 aa).

M46 contributes to the substrate binding site. R122 and T168 together coordinate ATP. G195 serves as a coordination point for substrate.

The protein belongs to the Thz kinase family. Mg(2+) serves as cofactor.

The enzyme catalyses 5-(2-hydroxyethyl)-4-methylthiazole + ATP = 4-methyl-5-(2-phosphooxyethyl)-thiazole + ADP + H(+). It functions in the pathway cofactor biosynthesis; thiamine diphosphate biosynthesis; 4-methyl-5-(2-phosphoethyl)-thiazole from 5-(2-hydroxyethyl)-4-methylthiazole: step 1/1. Its function is as follows. Catalyzes the phosphorylation of the hydroxyl group of 4-methyl-5-beta-hydroxyethylthiazole (THZ). This is Hydroxyethylthiazole kinase from Desulfatibacillum aliphaticivorans.